The primary structure comprises 133 residues: MGMTSDSIANLLTRIRNALMAEHLYVDIEHSKMLEAIVRILKQHGFVAHFLVKEENRKRLMRVFLRYGEDRRPVIHALKRVSKPSRRVYVSAAKIPYVFGNMGIAVLSTPQGVLEGSVARAKNVGGELLCLVW.

Belongs to the universal ribosomal protein uS8 family. In terms of assembly, part of the 30S ribosomal subunit. Contacts proteins S5 and S12.

Its function is as follows. One of the primary rRNA binding proteins, it binds directly to 16S rRNA central domain where it helps coordinate assembly of the platform of the 30S subunit. This chain is Small ribosomal subunit protein uS8, found in Chlamydia trachomatis serovar A (strain ATCC VR-571B / DSM 19440 / HAR-13).